The primary structure comprises 263 residues: Lens fiber major intrinsic protein (263 aa).

Residues 1 to 9 (MWELRSASF) lie on the Cytoplasmic side of the membrane. A helical transmembrane segment spans residues 10 to 29 (WRAIFAEFFATLFYVFFGLG). Residues 30–41 (ASLRWAPGPLHV) are Extracellular-facing. A helical transmembrane segment spans residues 42–59 (LQVALAFGLALATLVQTV). The Cytoplasmic portion of the chain corresponds to 60-61 (GH). The segment at residues 62–77 (ISGAHVNPAVTFAFLV) is an intramembrane region (discontinuously helical). Positions 68 to 70 (NPA) match the NPA 1 motif. The Cytoplasmic segment spans residues 78–82 (GSQMS). Residues 83 to 106 (LLRAFCYIAAQLLGAVAGAAVLYS) form a helical membrane-spanning segment. Residues 107 to 127 (VTPPAVRGNLALNTLHAGVSV) lie on the Extracellular side of the membrane. The helical transmembrane segment at 128-148 (GQATTVEIFLTLQFVLCIFAT) threads the bilayer. Residues 149 to 156 (YDERRNGR) are Cytoplasmic-facing. Residues 157-175 (MGSVALAVGFSLTLGHLFG) form a helical membrane-spanning segment. Residues 176–178 (MYY) are Extracellular-facing. Positions 179-193 (TGAGMNPARSFAPAI) form an intramembrane region, discontinuously helical. The NPA 2 signature appears at 184–186 (NPA). Topologically, residues 194-200 (LTRNFSN) are extracellular. The chain crosses the membrane as a helical span at residues 201-222 (HWVYWVGPIIGGGLGSLLYDFL). Over 223 to 263 (LFPRLKSVSERLSILKGARPSDSNGQPEGTGEPVELKTQAL) the chain is Cytoplasmic. Positions 227–237 (LKSVSERLSIL) are interaction with CALM. 3 positions are modified to phosphoserine: serine 235, serine 243, and serine 245. The interval 240–263 (ARPSDSNGQPEGTGEPVELKTQAL) is disordered. Deamidated asparagine is present on asparagine 246.

It belongs to the MIP/aquaporin (TC 1.A.8) family. In terms of assembly, homotetramer; each monomer provides an independent water pore. Two homotetramers on opposing membranes can dimerize, forming a cell-cell junction. Interacts with CALM; the calcium-calmodulin/CALM complex interacts with the cytoplasmic domains of two aquaporins, leading to channel closure. Interacts with BFSP1 (via C-terminus); prevents calcium-dependent inhibition of the water channel activity. In terms of processing, subject to partial proteolytic cleavage in the eye lens core. Partial proteolysis promotes interactions between tetramers from adjoining membranes. Post-translationally, fatty acylated at Met-1 and Lys-238. The acyl modifications, in decreasing order of ion abundance, are: oleoyl (C18:1) &gt; palmitoyl (C16:0) &gt; stearoyl (C18:0) &gt; eicosenoyl (C20:1) &gt; dihomo-gamma-linolenoyl (C20:3) &gt; palmitoleoyl (C16:1) &gt; eicosadienoyl (C20:2).

It localises to the cell membrane. It is found in the cell junction. It carries out the reaction H2O(in) = H2O(out). Its activity is regulated as follows. The water channel activity is inhibited by calcium through calmodulin/CALM. Functionally, aquaporins form homotetrameric transmembrane channels, with each monomer independently mediating water transport across the plasma membrane along its osmotic gradient. Specifically expressed in lens fiber cells, this aquaporin is crucial for maintaining lens water homeostasis and transparency. Beyond water permeability, it also acts as a cell-to-cell adhesion molecule, forming thin junctions between lens fiber cells that are essential for maintaining the ordered structure and transparency of the lens. The chain is Lens fiber major intrinsic protein from Mus musculus (Mouse).